The chain runs to 635 residues: 3-dehydroshikimate dehydratase (635 aa).

A divalent metal cation contacts are provided by E134, D165, Q191, and E239. VOC domains are found at residues G295–Q414 and R440–E590. Mg(2+) is bound by residues H443, H521, and E599.

It belongs to the bacterial two-domain DSD family. As to quaternary structure, homodimer. Co(2+) is required as a cofactor. Ni(2+) serves as cofactor. The cofactor is Mg(2+). Requires Mn(2+) as cofactor.

The catalysed reaction is 3-dehydroshikimate = 3,4-dihydroxybenzoate + H2O. It participates in aromatic compound metabolism; 3,4-dihydroxybenzoate biosynthesis. Its function is as follows. Catalyzes the conversion of 3-dehydroshikimate to protocatechuate (3,4-dihydroxybenzoate), a common intermediate of quinate and shikimate degradation pathways. In Pseudomonas putida (strain ATCC 47054 / DSM 6125 / CFBP 8728 / NCIMB 11950 / KT2440), this protein is 3-dehydroshikimate dehydratase.